A 92-amino-acid chain; its full sequence is Long neurotoxin 1 (92 aa).

The N-terminal stretch at 1–21 (MKTLLLTLVVVTIVCLDLGYT) is a signal peptide. Cystine bridges form between C24–C42, C35–C63, C67–C79, and C80–C85.

It belongs to the three-finger toxin family. Long-chain subfamily. Type II alpha-neurotoxin sub-subfamily. In terms of tissue distribution, expressed by the venom gland.

The protein localises to the secreted. Functionally, binds with high affinity to muscular (alpha-1/CHRNA1) and neuronal (alpha-7/CHRNA7) nicotinic acetylcholine receptor (nAChR) and inhibits acetylcholine from binding to the receptor, thereby impairing neuromuscular and neuronal transmission. This is Long neurotoxin 1 from Oxyuranus scutellatus scutellatus (Australian taipan).